The following is a 212-amino-acid chain: MIIAIDGPAASGKGTLAKRLAAHYGFRHLDTGVIYRAVAKAMLDAGADLTDEARAAEVARTLDPSRFDDPALKSHAVGEAASVVSAHPQVRAALVEFQKTFAAAPPGAVLDGRDIGTVICPDAEVKIFVVASPEVRAHRRFLEAQSRGEPADEAVILSDIVKRDERDKNRSAAPLKQAPDAVLLDNSYLDIEGGVRAAIDIVEAVRAGRRRV.

ATP is bound at residue 7 to 15 (GPAASGKGT).

Belongs to the cytidylate kinase family. Type 1 subfamily.

The protein resides in the cytoplasm. The catalysed reaction is CMP + ATP = CDP + ADP. It carries out the reaction dCMP + ATP = dCDP + ADP. This Rhodopseudomonas palustris (strain TIE-1) protein is Cytidylate kinase.